A 638-amino-acid polypeptide reads, in one-letter code: Sorting nexin-41 (638 aa).

Positions 1–14 (MDSDTSPNPFASSP) are enriched in low complexity. The segment at 1 to 69 (MDSDTSPNPF…MGATVPGPKP (69 aa)) is disordered. Residues 15–30 (PSSPSPRPSLPPPVPR) show a composition bias toward pro residues. In terms of domain architecture, PX spans 84–201 (GEQVHIVDAL…HRFLEEDVSW (118 aa)). Positions 118, 120, 144, and 168 each coordinate a 1,2-diacyl-sn-glycero-3-phospho-(1D-myo-inositol-3-phosphate). Disordered stretches follow at residues 215–239 (KNPL…SEAP), 408–432 (LERG…RERA), and 545–638 (PHPN…LGPL). Positions 225–239 (PTFQPTTPTSPSEAP) are enriched in low complexity. Basic and acidic residues predominate over residues 423–432 (EAARDERERA). The segment covering 552–562 (QTQTQVQSQQS) has biased composition (low complexity). Residues 585–601 (MKNEIERVEIEIADKPL) show a composition bias toward basic and acidic residues.

The protein belongs to the sorting nexin family.

The protein resides in the endosome membrane. Its subcellular location is the endomembrane system. May be required for cytoplasm to vacuole transport (Cvt) and pexophagy. This Cryptococcus neoformans var. neoformans serotype D (strain JEC21 / ATCC MYA-565) (Filobasidiella neoformans) protein is Sorting nexin-41 (SNX41).